Consider the following 562-residue polypeptide: Phosphopantothenoylcysteine decarboxylase subunit SIS2 (562 aa).

Residues 1-10 (MTAVASTSGK) are compositionally biased toward polar residues. 3 disordered regions span residues 1–63 (MTAV…SNAT), 97–165 (FSDL…KDYD), and 490–562 (GYPK…DKHQ). A compositionally biased stretch (basic and acidic residues) spans 27–42 (GQKEILLDHEDAKGKD). Composition is skewed to polar residues over residues 44-63 (IINS…SNAT) and 99-113 (DLKQ…TQLK). Phosphoserine occurs at positions 47, 50, 54, and 56. A compositionally biased stretch (low complexity) spans 121–134 (SPNSNPAPVSNSIP). A compositionally biased stretch (polar residues) spans 142-156 (NHTNTSRTTQLSGSP). Position 155 is a phosphoserine (serine 155). Residues 496 to 553 (EEEDDDEDEEEDDDEEEDTEDKNENNNDDDDDDDDDDDDDDDDDDDDDDDDEDEDEAE) are compositionally biased toward acidic residues.

This sequence belongs to the HFCD (homooligomeric flavin containing Cys decarboxylase) superfamily. In terms of assembly, interacts with the C-terminal domain of PPZ1. Component of the phosphopantothenoylcysteine decarboxylase (PPCDC) complex, a heterotrimer composed of CAB3, SIS2 and VHS3.

It localises to the nucleus. The protein resides in the cytoplasm. In terms of biological role, component of the phosphopantothenoylcysteine decarboxylase (PPCDC) involved in the coenzyme A synthesis. Acts as an inhibitory subunit of protein phosphatase PPZ1, which is involved in many cellular processes such as G1-S transition or salt tolerance. Also modulates the expression of the ENA1 ATPase. This chain is Phosphopantothenoylcysteine decarboxylase subunit SIS2 (SIS2), found in Saccharomyces cerevisiae (strain ATCC 204508 / S288c) (Baker's yeast).